The primary structure comprises 587 residues: Tripartite motif-containing protein 29 (587 aa).

Positions 1–71 (MEGADACRSN…SGEGKSGLFS (71 aa)) are disordered. Phosphoserine occurs at positions 21, 28, 58, and 104. Tyr106 carries the phosphotyrosine modification. The segment at 220 to 260 (FEARKCPLHGKTMELFCQTDQTCICYLCMFQEHKNHSTVTV) adopts a B box-type zinc-finger fold. Zn(2+) contacts are provided by Cys225, His228, Cys247, and His252. A coiled-coil region spans residues 259-348 (TVEEAKAEKE…AVDQVKVIVD (90 aa)). A Phosphothreonine modification is found at Thr476. The residue at position 489 (Ser489) is a Phosphoserine.

In terms of assembly, interacts with VIM and HINT1. Interacts with IKBKG/NEMO. Interacts with STING1.

Its subcellular location is the cytoplasm. The protein resides in the lysosome. Plays a crucial role in the regulation of macrophage activation in response to viral or bacterial infections within the respiratory tract. Mechanistically, TRIM29 interacts with IKBKG/NEMO in the lysosome where it induces its 'Lys-48' ubiquitination and subsequent degradation. In turn, the expression of type I interferons and the production of pro-inflammatory cytokines are inhibited. Additionally, induces the 'Lys-48' ubiquitination of STING1 in a similar way, leading to its degradation. This chain is Tripartite motif-containing protein 29 (Trim29), found in Mus musculus (Mouse).